The chain runs to 840 residues: Translation initiation factor IF-2 (840 aa).

Positions 95 to 143 (RSPDEIEAERQRELEEQRAAEEAERLKAEEAAARQRAEEEARKAEEAAR) are enriched in basic and acidic residues. Disordered regions lie at residues 95–155 (RSPD…ATAG) and 172–256 (KPAA…PTGP). Residues 144-155 (AKAAQEAAATAG) are compositionally biased toward low complexity. Composition is skewed to basic and acidic residues over residues 175-191 (AVEE…PKRD) and 223-232 (STDEESDGYR). Basic residues predominate over residues 233–247 (RGGRGGKSKLKKRNQ). In terms of domain architecture, tr-type G spans 340–509 (TRAPVVTVMG…LLQAEVLELK (170 aa)). The interval 349–356 (GHVDHGKT) is G1. GTP is bound at residue 349–356 (GHVDHGKT). Residues 374-378 (GITQH) are G2. A G3 region spans residues 395 to 398 (DTPG). GTP is bound by residues 395–399 (DTPGH) and 449–452 (NKID). Residues 449-452 (NKID) are G4. The G5 stretch occupies residues 485–487 (SAK).

The protein belongs to the TRAFAC class translation factor GTPase superfamily. Classic translation factor GTPase family. IF-2 subfamily.

The protein resides in the cytoplasm. Its function is as follows. One of the essential components for the initiation of protein synthesis. Protects formylmethionyl-tRNA from spontaneous hydrolysis and promotes its binding to the 30S ribosomal subunits. Also involved in the hydrolysis of GTP during the formation of the 70S ribosomal complex. The protein is Translation initiation factor IF-2 of Pseudomonas aeruginosa (strain LESB58).